The following is a 112-amino-acid chain: Gastrula zinc finger protein XlCGF16.1 (112 aa).

4 consecutive C2H2-type zinc fingers follow at residues 6-28, 34-56, 62-84, and 90-112; these read YNCS…QKTH, FVCF…QRIH, FSCT…HKTH, and FLCF…HRTH.

The protein belongs to the krueppel C2H2-type zinc-finger protein family.

The protein resides in the nucleus. Functionally, may be involved in transcriptional regulation. The chain is Gastrula zinc finger protein XlCGF16.1 from Xenopus laevis (African clawed frog).